A 62-amino-acid polypeptide reads, in one-letter code: Large ribosomal subunit protein uL30 (62 aa).

Belongs to the universal ribosomal protein uL30 family. As to quaternary structure, part of the 50S ribosomal subunit.

This is Large ribosomal subunit protein uL30 from Shouchella clausii (strain KSM-K16) (Alkalihalobacillus clausii).